The following is a 266-amino-acid chain: MNRYSNAFARLKAGSRGAFVPFVTLGDPGIDESLAIIDALVEGGADCLELGFPFSDPLADGPVIQGANIRALAAGTTPDTCFKMIEQIRAKYPELPIGLLLYANLVFANGIEAFYQRAKAAGVDSVLIADVPAEESAPFVAAARAEGIAPIFIAPPNASADTLRLVASLGEGYTYLLSRAGVTGADNKAGMPLDSVLSALKEFNAPPPLLGFGIAEPSQVQEAIAAGAAGAISGSAVVKRIEALKDDMPKLLTELKSFASAMKAAT.

Active-site proton acceptor residues include E49 and D60.

Belongs to the TrpA family. Tetramer of two alpha and two beta chains.

It catalyses the reaction (1S,2R)-1-C-(indol-3-yl)glycerol 3-phosphate + L-serine = D-glyceraldehyde 3-phosphate + L-tryptophan + H2O. Its pathway is amino-acid biosynthesis; L-tryptophan biosynthesis; L-tryptophan from chorismate: step 5/5. In terms of biological role, the alpha subunit is responsible for the aldol cleavage of indoleglycerol phosphate to indole and glyceraldehyde 3-phosphate. This Shewanella amazonensis (strain ATCC BAA-1098 / SB2B) protein is Tryptophan synthase alpha chain.